We begin with the raw amino-acid sequence, 568 residues long: UPF0313 protein FN0734 (568 aa).

The Radical SAM core domain maps to 289-562 (ALDTIKYSVT…KQKQKDIVTE (274 aa)). Cys-303, Cys-307, and Cys-310 together coordinate [4Fe-4S] cluster. The tract at residues 546-568 (VEKDNGKKQKQKDIVTEKRKNRK) is disordered.

Belongs to the UPF0313 family. The cofactor is [4Fe-4S] cluster.

The polypeptide is UPF0313 protein FN0734 (Fusobacterium nucleatum subsp. nucleatum (strain ATCC 25586 / DSM 15643 / BCRC 10681 / CIP 101130 / JCM 8532 / KCTC 2640 / LMG 13131 / VPI 4355)).